A 329-amino-acid chain; its full sequence is Endonuclease 8-like 2 (329 aa).

The active-site Schiff-base intermediate with DNA is the Pro-2. The Proton donor role is filled by Glu-3. Lys-50 serves as the catalytic Proton donor; for beta-elimination activity. The residue at position 50 (Lys-50) is an N6-acetyllysine. Ser-68 bears the Phosphoserine mark. Positions 88–112 are disordered; that stretch reads GPSAQEPSAGPSGSGEPVPSRSAET. N6-acetyllysine is present on Lys-150. Residue Asn-227 coordinates DNA. Residues 280-316 form an FPG-type zinc finger; sequence QIYQKEQCPSGHQVMKETFGPPDGLQRLTWWCPQCQP. Arg-306 (proton donor; for delta-elimination activity) is an active-site residue.

It belongs to the FPG family. As to quaternary structure, binds EP300.

The protein resides in the nucleus. It catalyses the reaction 2'-deoxyribonucleotide-(2'-deoxyribose 5'-phosphate)-2'-deoxyribonucleotide-DNA = a 3'-end 2'-deoxyribonucleotide-(2,3-dehydro-2,3-deoxyribose 5'-phosphate)-DNA + a 5'-end 5'-phospho-2'-deoxyribonucleoside-DNA + H(+). With respect to regulation, acetylation of Lys-50 leads to loss of DNA nicking activity. Its function is as follows. Involved in base excision repair of DNA damaged by oxidation or by mutagenic agents. Has DNA glycosylase activity towards 5-hydroxyuracil and other oxidized derivatives of cytosine with a preference for mismatched double-stranded DNA (DNA bubbles). Has low or no DNA glycosylase activity towards thymine glycol, 2-hydroxyadenine, hypoxanthine and 8-oxoguanine. Has AP (apurinic/apyrimidinic) lyase activity and introduces nicks in the DNA strand. Cleaves the DNA backbone by beta-delta elimination to generate a single-strand break at the site of the removed base with both 3'- and 5'-phosphates. The protein is Endonuclease 8-like 2 (Neil2) of Mus musculus (Mouse).